Consider the following 559-residue polypeptide: Membrane protein insertase YidC (559 aa).

Residues 7 to 24 (ILWVIFSMSLVLLYDNWQ) traverse the membrane as a helical segment. Low complexity-rich tracts occupy residues 45 to 55 (APAASGAAAQG) and 63 to 82 (QPAT…QAAA). Residues 45–82 (APAASGAAAQGDVPKANVQPATGTSAAPAAGAAPQAAA) are disordered. 5 helical membrane passes run 338–358 (LELV…FWLL), 364–384 (FLGN…LVFF), 434–454 (LGGC…YWVL), 472–492 (LSVP…MFVQ), and 507–527 (VMMI…AGLV).

The protein belongs to the OXA1/ALB3/YidC family. Type 1 subfamily. As to quaternary structure, interacts with the Sec translocase complex via SecD. Specifically interacts with transmembrane segments of nascent integral membrane proteins during membrane integration.

It is found in the cell inner membrane. Its function is as follows. Required for the insertion and/or proper folding and/or complex formation of integral membrane proteins into the membrane. Involved in integration of membrane proteins that insert both dependently and independently of the Sec translocase complex, as well as at least some lipoproteins. Aids folding of multispanning membrane proteins. This chain is Membrane protein insertase YidC, found in Cupriavidus taiwanensis (strain DSM 17343 / BCRC 17206 / CCUG 44338 / CIP 107171 / LMG 19424 / R1) (Ralstonia taiwanensis (strain LMG 19424)).